The chain runs to 480 residues: MAVARAALGPLVTGLYDVQAFKFGDFVLKSGLSSPIYIDLRGIVSRPRLLSQVADILFQTAQNAGISFDTVCGVPYTALPLATVICSTNQIPMLIRRKETKDYGTKRLVEGTINPGETCLIIEDVVTSGSSVLETVEVLQKEGLKVTDAIVLLDREQGGKDKLQAHGIRLHSVCTLSKMLEILEQQKKVDAETVGRVKRFIQENVFVAANHNGSPLSIKEAPKELSFGARAELPRIHPVASKLLRLMQKKETNLCLSADVSLARELLQLADALGPSICMLKTHVDILNDFTLDVMKELITLAKCHEFLIFEDRKFADIGNTVKKQYEGGIFKIASWADLVNAHVVPGSGVVKGLQEVGLPLHRGCLLIAEMSSTGSLATGDYTRAAVRMAEEHSEFVVGFISGSRVSMKPEFLHLTPGVQLEAGGDNLGQQYNSPQEVIGKRGSDIIIVGRGIISAADRLEAAEMYRKAAWEAYLSRLGV.

Alanine 2 carries the post-translational modification N-acetylalanine. Residues 2–214 (AVARAALGPL…VFVAANHNGS (213 aa)) form an OPRTase region. Tyrosine 37 carries the phosphotyrosine modification. Position 214 is a phosphoserine (serine 214). Residues 215–220 (PLSIKE) are domain linker. The interval 221 to 480 (APKELSFGAR…WEAYLSRLGV (260 aa)) is OMPdecase. Serine 257 contributes to the orotidine 5'-phosphate binding site. UMP-binding positions include serine 257, aspartate 259, and 281-283 (KTH). Residue lysine 281 participates in orotidine 5'-phosphate binding. Catalysis depends on for OMPdecase activity residues aspartate 312, lysine 314, and aspartate 317. Orotidine 5'-phosphate-binding positions include lysine 314, aspartate 317, threonine 321, serine 372, 430–432 (QQY), and 450–451 (GR). Residues aspartate 317, threonine 321, serine 372, 430 to 432 (QQY), and 450 to 451 (GR) each bind UMP.

This sequence in the N-terminal section; belongs to the purine/pyrimidine phosphoribosyltransferase family. In the C-terminal section; belongs to the OMP decarboxylase family. As to quaternary structure, homodimer; dimerization is required for enzymatic activity.

The catalysed reaction is orotidine 5'-phosphate + diphosphate = orotate + 5-phospho-alpha-D-ribose 1-diphosphate. It carries out the reaction orotidine 5'-phosphate + H(+) = UMP + CO2. The protein operates within pyrimidine metabolism; UMP biosynthesis via de novo pathway; UMP from orotate: step 1/2. It functions in the pathway pyrimidine metabolism; UMP biosynthesis via de novo pathway; UMP from orotate: step 2/2. Functionally, bifunctional enzyme catalyzing the last two steps of de novo pyrimidine biosynthesis, orotate phosphoribosyltransferase (OPRT), which converts orotate to orotidine-5'-monophosphate (OMP), and orotidine-5'-monophosphate decarboxylase (ODC), the terminal enzymatic reaction that decarboxylates OMP to uridine monophosphate (UMP). The polypeptide is Uridine 5'-monophosphate synthase (Homo sapiens (Human)).